A 424-amino-acid polypeptide reads, in one-letter code: D-inositol 3-phosphate glycosyltransferase (424 aa).

A 1D-myo-inositol 3-phosphate-binding site is contributed by His21. UDP-N-acetyl-alpha-D-glucosamine is bound by residues 27–28 (QP) and Gly35. Residues 32–37 (DAGGMN), Lys90, Tyr123, Thr147, and Arg167 each bind 1D-myo-inositol 3-phosphate. Positions 241, 246, and 299 each coordinate UDP-N-acetyl-alpha-D-glucosamine. Phe308, Gln309, and Ala311 together coordinate Mg(2+). UDP-N-acetyl-alpha-D-glucosamine is bound by residues Glu321 and Glu329. Thr335 contacts Mg(2+).

This sequence belongs to the glycosyltransferase group 1 family. MshA subfamily. As to quaternary structure, homodimer.

It catalyses the reaction 1D-myo-inositol 3-phosphate + UDP-N-acetyl-alpha-D-glucosamine = 1D-myo-inositol 2-acetamido-2-deoxy-alpha-D-glucopyranoside 3-phosphate + UDP + H(+). Its function is as follows. Catalyzes the transfer of a N-acetyl-glucosamine moiety to 1D-myo-inositol 3-phosphate to produce 1D-myo-inositol 2-acetamido-2-deoxy-glucopyranoside 3-phosphate in the mycothiol biosynthesis pathway. The protein is D-inositol 3-phosphate glycosyltransferase of Mycobacterium avium (strain 104).